The primary structure comprises 406 residues: MDNIQNLCTNPLIILIGTYMSIKYYLFQIDYFNIQFGLYVTFIISLLYGSVRFNSLQQKKLMDGLIFILHVLFVLICFSIKSEIISGTLNTIFYFGFVKTIIISVVIGSFILSELDNNNHNRIIPEKMCCFCKQNIKKIMVTFVKNIDIDPIIYWSKTFFVKLYTEFKNINSVLSKNTRSEIIIDRICLKISLIKMYLYSVIVPYAISSFFGMNNDYKNIINNIDKIDYPGNLDMSFLEQEVFDSEHLDDLDDLDTPDTLNVPISTNNTDNLNSVKTNQQFNTPVAKSNTKSNRRKKTGKKIRLANQTTSSNSSNNQSPESTGTNNNVVDNKTLLRNKLREKRLARTGSLPTVPQNVDMSMINSLMQNMINNGSLEKIATEFAKNPENVADINNPKLRKLAKSMTK.

5 helical membrane-spanning segments follow: residues 7 to 27 (LCTNPLIILIGTYMSIKYYLF), 31 to 51 (YFNIQFGLYVTFIISLLYGSV), 65 to 85 (LIFILHVLFVLICFSIKSEII), 92 to 112 (IFYFGFVKTIIISVVIGSFIL), and 191 to 211 (ISLIKMYLYSVIVPYAISSFF). Positions 259–331 (TLNVPISTNN…TGTNNNVVDN (73 aa)) are disordered. Residues 262–291 (VPISTNNTDNLNSVKTNQQFNTPVAKSNTK) are compositionally biased toward polar residues. A compositionally biased stretch (basic residues) spans 292–303 (SNRRKKTGKKIR). The segment covering 306-318 (NQTTSSNSSNNQS) has biased composition (low complexity). Positions 319–330 (PESTGTNNNVVD) are enriched in polar residues.

It is found in the membrane. This is an uncharacterized protein from Acanthamoeba polyphaga (Amoeba).